A 404-amino-acid polypeptide reads, in one-letter code: Cysteine desulfurase IscS (404 aa).

Residues 73–74, Asn-153, Gln-181, and 201–203 contribute to the pyridoxal 5'-phosphate site; these read AT and SAH. Lys-204 carries the N6-(pyridoxal phosphate)lysine modification. Pyridoxal 5'-phosphate is bound at residue Thr-241. Cys-327 functions as the Cysteine persulfide intermediate in the catalytic mechanism. Cys-327 contacts [2Fe-2S] cluster.

The protein belongs to the class-V pyridoxal-phosphate-dependent aminotransferase family. NifS/IscS subfamily. Homodimer. Forms a heterotetramer with IscU, interacts with other sulfur acceptors. It depends on pyridoxal 5'-phosphate as a cofactor.

The protein localises to the cytoplasm. It catalyses the reaction (sulfur carrier)-H + L-cysteine = (sulfur carrier)-SH + L-alanine. Its pathway is cofactor biosynthesis; iron-sulfur cluster biosynthesis. Functionally, master enzyme that delivers sulfur to a number of partners involved in Fe-S cluster assembly, tRNA modification or cofactor biosynthesis. Catalyzes the removal of elemental sulfur atoms from cysteine to produce alanine. Functions as a sulfur delivery protein for Fe-S cluster synthesis onto IscU, an Fe-S scaffold assembly protein, as well as other S acceptor proteins. The protein is Cysteine desulfurase IscS of Anaeromyxobacter sp. (strain Fw109-5).